The sequence spans 712 residues: MAKIVTRGDINNSLNLNNSNSNSNSNSSININNNNNSNNSNNNNLNNKNLKKCPICNKSLTNNDPNNLNGSILHSIECFVEISIALKLEFKKSISIAELNHIGKVNNIKPSQQNSPQNNSNSNNINININNNSNNGNSTSNSSDETVEGFKKRKRKDEFNTFDNQQTSNNSSNDNDDISPTTSPQLEQHQQYQQQQHQQQHHHHHHQQQQSSPIITRQQQKQLLLSPPPPLLQIETPSSPPLQQQQQPQPQQQPQPQQQQIPQAQQLRFIDSQRLKQQQQLQLEQQLFQQQQQQEQHQQQQLQQLHQQNQIEIQRYHQRQLQQQQQIQIEQQRQLLVQQQNQHQQKQIEYQKLQQQHLLLHQQQQQQQQQPQHQQNQQNQQNQQNQQNQQLLQHQQQQNQLAIIQKRLLQQQQQQQQQQQQQQQLIQQQQQQQQANHSKLLHLYQQLPQPFIHIFNSLTTEQKQVLHTRVLSHPPSDPMSPLQFVQTQLVQFNRQMDLRKSQQSQSVNTITQPQQQQQQQQQQQQQQQQQQQQQQQQQQQQQQQQQQQQQQQQQQQQYQQQVPQQQQQQQYQQQIQQQQEELVESELAISYRAAIFPYLFGTRCLGNRCPDSFKKYHIYIKNELIFSICPIQHDNNSFSNAKRVLYSALEYAGVIDNVIKSSSVVCNGCDERVGDLIRYEKRESSSGGREIQFYCSIDCFLNTNFYKKKQTK.

Disordered regions lie at residues 1–46 (MAKI…NNLN), 107–264 (NIKP…IPQA), and 370–389 (QPQHQQNQQNQQNQQNQQNQ). Low complexity-rich tracts occupy residues 10–46 (INNSLNLNNSNSNSNSNSSININNNNNSNNSNNNNLN), 107–143 (NIKPSQQNSPQNNSNSNNINININNNSNNGNSTSNSS), and 161–173 (TFDNQQTSNNSSN). The span at 178–187 (ISPTTSPQLE) shows a compositional bias: polar residues. 2 stretches are compositionally biased toward low complexity: residues 188–198 (QHQQYQQQQHQ) and 241–264 (PLQQQQQPQPQQQPQPQQQQIPQA).

This is an uncharacterized protein from Dictyostelium discoideum (Social amoeba).